The sequence spans 736 residues: MAKRGAFSSFHSFLIVLLFLNSVLAVTHGHQDKQVYIVYMGSLPSRADYTPMSHHMNILQEVARESSIEGRLVRSYKRSFNGFVARLTESERERVADMEGVVSVFPNKKLKLQTSASWDFMGLKEGKGTKRNPSVESDTIIGVFDGGIWPESESFSDKGFGPPPKKWKGICAGGKNFTCNNKLIGARHYSPGDARDSTGHGTHTASIAAGNAVANTSFFGIGNGTVRGAVPASRIAVYRVCAGECRDDAILSAFDDAISDGVDIITISIGDINVYPFEKDPIAIGAFHAMSKGILTVNAAGNTGPDTASITSLAPWLLTVAASTANREFVSKVVLGDGKTLVGKSVNGFDLKGKKFPLVYGKSAALSLSQAKCAEDCTPECLDASLVKGKILVCNRFLPYVAYTKRAVAAIFEDGSDWAQINGLPVSGLQKDDFESVLSYFKSEKSPEAAVLKSESIFYQTAPKILSFSSRGPNIIVADILKPDITAPGLEILAANSLRASPFYDTAYVKYSVESGTSMSCPHAAGVAAYVKTFHPQWSPSMIKSAIMTTAWSMNASQSGYASTEFAYGAGHVDPIAATNPGLVYEITKTDYFAFLCGMNYNKTTVKLISGEAVTCSEKISPRNLNYPSMSAKLSGSNISFIVTFNRTVTNVGTPNSTYKSKVVLNHGSKLNVKVSPSVLSMKSMNEKQSFTVTVSASELHSELPSSANLIWSDGTHNVRSPIVVYTGDFSQPSSS.

The first 25 residues, 1–25 (MAKRGAFSSFHSFLIVLLFLNSVLA), serve as a signal peptide directing secretion. The propeptide at 26 to 113 (VTHGHQDKQV…VFPNKKLKLQ (88 aa)) is activation peptide. The Inhibitor I9 domain maps to 35–112 (VYIVYMGSLP…SVFPNKKLKL (78 aa)). A Peptidase S8 domain is found at 117 to 579 (SWDFMGLKEG…AGHVDPIAAT (463 aa)). D145 functions as the Charge relay system in the catalytic mechanism. The N-linked (GlcNAc...) asparagine glycan is linked to N176. Catalysis depends on H200, which acts as the Charge relay system. N215 and N223 each carry an N-linked (GlcNAc...) asparagine glycan. The PA domain occupies 355-437 (KFPLVYGKSA…GLQKDDFESV (83 aa)). S518 serves as the catalytic Charge relay system. N-linked (GlcNAc...) asparagine glycosylation is found at N555, N602, N638, N646, and N656.

It belongs to the peptidase S8 family. In terms of processing, the C-terminal propeptide is autocleaved.

The protein localises to the secreted. This chain is Subtilisin-like protease SBT4.11, found in Arabidopsis thaliana (Mouse-ear cress).